The following is a 391-amino-acid chain: Phosphoglycerate kinase (391 aa).

Substrate contacts are provided by residues 21-23 (DLN), arginine 36, 59-62 (HLGR), arginine 113, and arginine 146. Residues lysine 197, glutamate 319, and 345–348 (GGDT) each bind ATP.

It belongs to the phosphoglycerate kinase family. Monomer.

The protein resides in the cytoplasm. The catalysed reaction is (2R)-3-phosphoglycerate + ATP = (2R)-3-phospho-glyceroyl phosphate + ADP. It functions in the pathway carbohydrate degradation; glycolysis; pyruvate from D-glyceraldehyde 3-phosphate: step 2/5. This chain is Phosphoglycerate kinase, found in Shewanella denitrificans (strain OS217 / ATCC BAA-1090 / DSM 15013).